A 632-amino-acid polypeptide reads, in one-letter code: Extracellular metalloproteinase 2 (632 aa).

Positions Met-1–Gly-19 are cleaved as a signal peptide. The propeptide occupies His-20–Ser-244. N-linked (GlcNAc...) asparagine glycosylation is present at Asn-270. Residues Asn-294–Asn-310 show a composition bias toward polar residues. Positions Asn-294 to Arg-313 are disordered. A Zn(2+)-binding site is contributed by His-429. Glu-430 is a catalytic residue. Residue His-433 participates in Zn(2+) binding.

The protein belongs to the peptidase M36 family. The cofactor is Zn(2+).

Its subcellular location is the secreted. Functionally, secreted metalloproteinase probably acting as a virulence factor. In Arthroderma otae (Microsporum canis), this protein is Extracellular metalloproteinase 2 (MEP2).